The sequence spans 347 residues: N-acetyl-gamma-glutamyl-phosphate reductase (347 aa).

Cys-152 is an active-site residue.

Belongs to the NAGSA dehydrogenase family. Type 1 subfamily.

The protein localises to the cytoplasm. It carries out the reaction N-acetyl-L-glutamate 5-semialdehyde + phosphate + NADP(+) = N-acetyl-L-glutamyl 5-phosphate + NADPH + H(+). It functions in the pathway amino-acid biosynthesis; L-arginine biosynthesis; N(2)-acetyl-L-ornithine from L-glutamate: step 3/4. Functionally, catalyzes the NADPH-dependent reduction of N-acetyl-5-glutamyl phosphate to yield N-acetyl-L-glutamate 5-semialdehyde. The polypeptide is N-acetyl-gamma-glutamyl-phosphate reductase (Neisseria meningitidis serogroup C / serotype 2a (strain ATCC 700532 / DSM 15464 / FAM18)).